The primary structure comprises 416 residues: PTS system N-acetylglucosamine-specific EIIC component (416 aa).

Positions 16–406 (SGLFQGLQKV…FNLKTPGREP (391 aa)) constitute a PTS EIIC type-1 domain. Transmembrane regions (helical) follow at residues 68 to 88 (AGGA…AIGF), 96 to 116 (TALA…AFPV), 130 to 150 (TYND…AVLW), 170 to 190 (LVPI…GLVW), 196 to 216 (GISN…ALFG), 266 to 286 (IFQA…ALAM), 298 to 318 (VLGM…TEPI), 323 to 343 (MFIA…SMAI), 344 to 364 (TWGL…DYAL), and 375 to 395 (IIPI…FAIV).

The protein localises to the cell membrane. In terms of biological role, the phosphoenolpyruvate-dependent sugar phosphotransferase system (sugar PTS), a major carbohydrate active transport system, catalyzes the phosphorylation of incoming sugar substrates concomitantly with their translocation across the cell membrane. This system is involved in N-acetylglucosamine (GlcNAc) transport. High-affinity permease, which exhibits a narrow specificity for GlcNAc. Essential for C-signaling between vegetative growth and development. The polypeptide is PTS system N-acetylglucosamine-specific EIIC component (Streptomyces coelicolor (strain ATCC BAA-471 / A3(2) / M145)).